The sequence spans 341 residues: RNA 3'-terminal phosphate cyclase (341 aa).

ATP contacts are provided by residues Gln-102 and 283 to 287; that span reads HLADQ. His-308 (tele-AMP-histidine intermediate) is an active-site residue.

The protein belongs to the RNA 3'-terminal cyclase family. Type 1 subfamily.

The protein resides in the cytoplasm. The enzyme catalyses a 3'-end 3'-phospho-ribonucleotide-RNA + ATP = a 3'-end 2',3'-cyclophospho-ribonucleotide-RNA + AMP + diphosphate. In terms of biological role, catalyzes the conversion of 3'-phosphate to a 2',3'-cyclic phosphodiester at the end of RNA. The mechanism of action of the enzyme occurs in 3 steps: (A) adenylation of the enzyme by ATP; (B) transfer of adenylate to an RNA-N3'P to produce RNA-N3'PP5'A; (C) and attack of the adjacent 2'-hydroxyl on the 3'-phosphorus in the diester linkage to produce the cyclic end product. The biological role of this enzyme is unknown but it is likely to function in some aspects of cellular RNA processing. This Ectopseudomonas mendocina (strain ymp) (Pseudomonas mendocina) protein is RNA 3'-terminal phosphate cyclase.